Here is a 231-residue protein sequence, read N- to C-terminus: Thrombin-like enzyme leucurobin (231 aa).

A Peptidase S1 domain is found at 1–223 (VIGGDECDIN…YLPWIQSIIA (223 aa)). Cystine bridges form between Cys-7–Cys-139, Cys-26–Cys-42, Cys-74–Cys-230, Cys-118–Cys-184, Cys-150–Cys-163, and Cys-174–Cys-199. Catalysis depends on charge relay system residues His-41 and Asp-86. Asn-146 carries an N-linked (GlcNAc...) asparagine glycan. Ser-178 functions as the Charge relay system in the catalytic mechanism. Asn-225 carries an N-linked (GlcNAc...) asparagine glycan.

The protein belongs to the peptidase S1 family. Snake venom subfamily. In terms of assembly, monomer. Post-translationally, glycosylated. Expressed by the venom gland.

The protein resides in the secreted. It carries out the reaction Selective cleavage of Arg-|-Xaa bond in fibrinogen, to form fibrin, and release fibrinopeptide A. The specificity of further degradation of fibrinogen varies with species origin of the enzyme.. With respect to regulation, inhibited by PMSF and benzamidine. Its clotting effect is strongly inhibited by antibothropic serum. Is not inhibited by heparin. Its function is as follows. Thrombin-like snake venom serine protease that cleaves Arg-Gly bonds in alpha-chain of fibrinogen (FGA). Induces temporary episodes of opisthotonos and rapid rolling around the long axis of the animal (gyroxin-like effect), when injected into the tail veins of mice (0.143 ug/g mouse). The chain is Thrombin-like enzyme leucurobin from Bothrops leucurus (Whitetail lancehead).